The chain runs to 720 residues: MITANSFERTIGGRKLVIESGKLARLADAAITIRYADTELLVTLCSAKKPREGVDFLPLTIDYEERMYAAGKIPGGFIRREGRPSEQAILAGRLTDRPLRPLLPKEWRNDLQIIITVIASDKENDADIWGVVGASTVLAMSEIPYEGPVGASRIGYINGEFVLNPTFAQLESSQLDLVVVSTRKAVVMIEAGSKEIPEDIMINAIEFAHKANQELIDLQDEIRAKLGKEKLPVPVLEIPEEVKTAVAAFVKGRVNEALSHQDKTARENAVEGLQAELVAALSETFAEGDILAAYDKEIKKAIRSTILEKDIRVNGRGIKQLRQLDAETGLLPRVHGSALFTRGDTQVMAITTLGSLQESQQLDGLSAEDTKRFMLHYNFAPFSTGEVKRSGSPGRREIGHGALAERALVPILPTPEEFPYTIRLVADVVGSSGSTSMGSVCSSSLSLMDAGVPVKKAVAGISIGLITGENGTYCTITDIEGIEDNYGDMDFKVAGTRDGITAIQVDMKVKGISFDIIRDAIYQAKEARYNILDVMDKALAQPKTELSPYAPRMYKINIDPSKIGSVIGSGGKTIRSIIEQTNTTVDIENDGTVVIGAIDEASAKKAIKIIEDLTKDIEAGSIYTGKVTRIMTFGAFVEILPGKEGMVHISELADHRVEKVEDIVKVGDDITVKVIEIDNQGRVNLSHRVILNPNAVPISRNRDSQPRRPGPFRPSDRSNS.

Mg(2+)-binding residues include aspartate 484 and aspartate 490. Residues 551–610 (PRMYKINIDPSKIGSVIGSGGKTIRSIIEQTNTTVDIENDGTVVIGAIDEASAKKAIKII) enclose the KH domain. The S1 motif domain maps to 620–688 (GSIYTGKVTR…NQGRVNLSHR (69 aa)). Positions 697-720 (PISRNRDSQPRRPGPFRPSDRSNS) are disordered.

This sequence belongs to the polyribonucleotide nucleotidyltransferase family. It depends on Mg(2+) as a cofactor.

It is found in the cytoplasm. The enzyme catalyses RNA(n+1) + phosphate = RNA(n) + a ribonucleoside 5'-diphosphate. In terms of biological role, involved in mRNA degradation. Catalyzes the phosphorolysis of single-stranded polyribonucleotides processively in the 3'- to 5'-direction. This is Polyribonucleotide nucleotidyltransferase from Dehalococcoides mccartyi (strain ATCC BAA-2100 / JCM 16839 / KCTC 5957 / BAV1).